A 202-amino-acid chain; its full sequence is Small ribosomal subunit protein uS4 (202 aa).

Positions 22–43 are disordered; it reads TRKSARRAYPPGQHGQNRKKRS. The S4 RNA-binding domain maps to 90–152; it reads MRLDNTVFRL…AQSRKLVEAN (63 aa).

The protein belongs to the universal ribosomal protein uS4 family. Part of the 30S ribosomal subunit. Contacts protein S5. The interaction surface between S4 and S5 is involved in control of translational fidelity.

Its function is as follows. One of the primary rRNA binding proteins, it binds directly to 16S rRNA where it nucleates assembly of the body of the 30S subunit. In terms of biological role, with S5 and S12 plays an important role in translational accuracy. The protein is Small ribosomal subunit protein uS4 of Nostoc punctiforme (strain ATCC 29133 / PCC 73102).